A 345-amino-acid polypeptide reads, in one-letter code: Methionine import ATP-binding protein MetN (345 aa).

In terms of domain architecture, ABC transporter spans 2–241; that stretch reads IKLNNITKIF…PKTELAQEFI (240 aa). 38-45 serves as a coordination point for ATP; it reads GASGAGKS.

This sequence belongs to the ABC transporter superfamily. Methionine importer (TC 3.A.1.24) family. As to quaternary structure, the complex is composed of two ATP-binding proteins (MetN), two transmembrane proteins (MetI) and a solute-binding protein (MetQ).

It is found in the cell inner membrane. It catalyses the reaction L-methionine(out) + ATP + H2O = L-methionine(in) + ADP + phosphate + H(+). It carries out the reaction D-methionine(out) + ATP + H2O = D-methionine(in) + ADP + phosphate + H(+). In terms of biological role, part of the ABC transporter complex MetNIQ involved in methionine import. Responsible for energy coupling to the transport system. In Haemophilus influenzae (strain 86-028NP), this protein is Methionine import ATP-binding protein MetN.